Consider the following 814-residue polypeptide: Origin of replication complex subunit 1 (814 aa).

Over residues 1-15 (MDLSATPSRSKSGLR) the composition is skewed to polar residues. A disordered region spans residues 1 to 127 (MDLSATPSRS…PKKPKKRAYY (127 aa)). 2 stretches are compositionally biased toward low complexity: residues 51 to 62 (APMSPVTPSSVR) and 69 to 80 (ETPTKVTSETPV). The Nuclear localization signal motif lies at 105 to 112 (PKRQRQRQ). Residues 108–127 (QRQRQRQRQQPKKPKKRAYY) show a composition bias toward basic residues. The segment at 157 to 181 (DPEAEECRVCFRAGAAVMVECDVCL) is histone H3 binding. The PHD-type zinc-finger motif lies at 160 to 209 (AEECRVCFRAGAAVMVECDVCLGGFHLRCVRPPLRRVPEGDWACPYCEAE). Zn(2+)-binding residues include C163, C166, C177, C180, H185, and C188. A histone H3 binding region spans residues 197–201 (PEGDW). Positions 203 and 206 each coordinate Zn(2+). Positions 218-335 (PKPPEGKRIV…IHWHNFKRLA (118 aa)) constitute a BAH domain. Positions 310 to 315 (ASDQGD) are histone H3 binding. Acidic residues-rich tracts occupy residues 339 to 349 (DEPETKEDPGD) and 360 to 373 (SDSDEDSEYDEEEE). Residues 339–384 (DEPETKEDPGDEPYNAGNDYVSDSDEDSEYDEEEEPTKCSSARTHQ) are disordered. The necessary and sufficient for ORC complex assembly stretch occupies residues 433–804 (PKSLPCRDKE…DDVTFALKES (372 aa)). ATP contacts are provided by residues 468–475 (GVPGTGKT) and 468–476 (GVPGTGKTM). Mg(2+) is bound by residues D558 and E559. E559, N592, and R657 together coordinate ATP.

The protein belongs to the ORC1 family. As to quaternary structure, component of the origin recognition complex (ORC) composed of at least ORC1, ORC2, ORC3, ORC4, ORC5 and ORC6. ORC is regulated in a cell-cycle and development dependent manner. It is sequentially assembled at the exit from anaphase of mitosis and disassembled as cells enter S phase. Binds unmodified and methylated histone H3. In terms of tissue distribution, expressed strongly in root tips and shoot apical meristem (SAM), and weakly in young leaves. Not detected in mature leaves.

It localises to the nucleus. In terms of biological role, essential protein. Component of the origin recognition complex (ORC) that binds origins of replication. It has a role in both chromosomal replication and mating type transcriptional silencing. Binds to the ARS consensus sequence (ACS) of origins of replication. H3K4me3 effector that positively regulates the transcription of a subset of genes. Required for cell proliferation. The protein is Origin of replication complex subunit 1 of Oryza sativa subsp. japonica (Rice).